The chain runs to 70 residues: DNA-directed RNA polymerase subunit omega (70 aa).

It belongs to the RNA polymerase subunit omega family. In terms of assembly, the RNAP catalytic core consists of 2 alpha, 1 beta, 1 beta' and 1 omega subunit. When a sigma factor is associated with the core the holoenzyme is formed, which can initiate transcription.

The enzyme catalyses RNA(n) + a ribonucleoside 5'-triphosphate = RNA(n+1) + diphosphate. Functionally, promotes RNA polymerase assembly. Latches the N- and C-terminal regions of the beta' subunit thereby facilitating its interaction with the beta and alpha subunits. The protein is DNA-directed RNA polymerase subunit omega of Bacillus anthracis.